Here is a 99-residue protein sequence, read N- to C-terminus: Protein adenylyltransferase MntA (99 aa).

The GSX(10)DXD motif signature appears at 33-47; the sequence is GSYVRGEAKEDSDVD. Residues Asp-45 and Asp-47 contribute to the active site. Mg(2+) contacts are provided by Asp-45, Asp-47, and Asp-77.

The protein belongs to the MntA antitoxin family. Mg(2+) is required as a cofactor.

The catalysed reaction is L-tyrosyl-[protein] + ATP = O-(5'-adenylyl)-L-tyrosyl-[protein] + diphosphate. It catalyses the reaction O-(5'-adenylyl)-L-tyrosyl-[protein] + ATP = O-[5'-(adenylyl-(5'-&gt;3')-adenylyl)]-L-tyrosyl-[protein] + diphosphate. Antitoxin component of a type VII toxin-antitoxin (TA) system. Overexpression in E.coli neutralizes the toxic effect of cognate toxin HepT. Neutralization is mostly due to AMPylation of the toxin by this enzyme. This Thermococcus cleftensis (strain DSM 27260 / KACC 17922 / CL1) protein is Protein adenylyltransferase MntA.